We begin with the raw amino-acid sequence, 886 residues long: Leucine-rich repeat-containing protein sog2 (886 aa).

LRR repeat units lie at residues 28–49 (NALTLDLSHLNLRELPYEQLER), 53–74 (RIARLALGHNFIKSIGPEILKF), 76–97 (RLRYLNIRSNVLREFPESLCRL), 99–120 (SLEILDISRNKIKQLPESFGAL), 122–143 (NLKVLSISKNRLFELPTYIAHM), and 145–166 (NLEILKIENNHIVFPPPHIANN). Disordered stretches follow at residues 236 to 288 (SPGM…THPP), 301 to 364 (SPRQ…ASPI), 394 to 431 (PTQLSASAKTSAISLPEVAKKERNRSNSTNDDYSSTRL), and 455 to 483 (RIFAQDPHPSPRLKKEETHENGSNLTNDS). Positions 243-277 (VTPSPHSHSPAGHQQSTPKSTLSKTNENSEGTLYD) are enriched in polar residues. Ser301 is subject to Phosphoserine. 3 stretches are compositionally biased toward polar residues: residues 312–347 (SLATGLNSPSVSKPPSSATGPLYHSPQSSLTNSSVA), 394–406 (PTQLSASAKTSAI), and 419–431 (SNSTNDDYSSTRL). Ser464 carries the post-translational modification Phosphoserine.

The protein localises to the cytoplasm. The protein resides in the nucleus. The chain is Leucine-rich repeat-containing protein sog2 from Schizosaccharomyces pombe (strain 972 / ATCC 24843) (Fission yeast).